Reading from the N-terminus, the 119-residue chain is Large ribosomal subunit protein bL20 (119 aa).

This sequence belongs to the bacterial ribosomal protein bL20 family.

Binds directly to 23S ribosomal RNA and is necessary for the in vitro assembly process of the 50S ribosomal subunit. It is not involved in the protein synthesizing functions of that subunit. This chain is Large ribosomal subunit protein bL20, found in Geobacillus thermodenitrificans (strain NG80-2).